Consider the following 246-residue polypeptide: Protein YIPF4 (246 aa).

The Cytoplasmic portion of the chain corresponds to 1–115; it reads MQPPGPPPAY…FNRQVVRDNP (115 aa). A helical membrane pass occupies residues 116–136; it reads DFWGPLAVVLFFSMISLYGQF. The Lumenal portion of the chain corresponds to 137–140; it reads RVVS. The chain crosses the membrane as a helical span at residues 141–161; the sequence is WIITIWIFGSLTIFLLARVLG. The Cytoplasmic portion of the chain corresponds to 162–168; it reads GEVAYGQ. Residues 169–189 form a helical membrane-spanning segment; that stretch reads VLGVIGYSLLPLIVIAPILLV. Residues 190 to 197 lie on the Lumenal side of the membrane; that stretch reads VGSFEMVS. Residues 198-218 form a helical membrane-spanning segment; the sequence is TLIKLFGVFWAAYSAASLLVG. Topologically, residues 219–225 are cytoplasmic; that stretch reads EEFKTKK. Residues 226–246 form a helical membrane-spanning segment; sequence PLLIYPIFLLYIYFLSLYTGV.

It belongs to the YIP1 family. Interacts with YIPF3 and YIPF5.

It localises to the golgi apparatus. The protein localises to the cis-Golgi network membrane. In terms of biological role, involved in the maintenance of the Golgi structure. The protein is Protein YIPF4 (Yipf4) of Mus musculus (Mouse).